Reading from the N-terminus, the 433-residue chain is Bifunctional protein GlmU (433 aa).

Residues 1–226 (MLSVIILAAG…EECFLGVNSQ (226 aa)) are pyrophosphorylase. UDP-N-acetyl-alpha-D-glucosamine-binding positions include 7–10 (LAAG), lysine 21, and 80–81 (GT). Residue aspartate 106 coordinates Mg(2+). 4 residues coordinate UDP-N-acetyl-alpha-D-glucosamine: glycine 138, glutamate 152, asparagine 167, and asparagine 224. Position 224 (asparagine 224) interacts with Mg(2+). Residues 227–247 (TERAKAEEIMLERLRKNAMDL) are linker. Residues 248 to 433 (GVVMQLPNSI…NGYFKFFKKP (186 aa)) are N-acetyltransferase. Residues arginine 311 and lysine 328 each contribute to the UDP-N-acetyl-alpha-D-glucosamine site. The active-site Proton acceptor is the histidine 339. Residues tyrosine 342 and asparagine 353 each contribute to the UDP-N-acetyl-alpha-D-glucosamine site. Residues alanine 356, 362–363 (NY), serine 381, serine 399, and arginine 416 each bind acetyl-CoA.

This sequence in the N-terminal section; belongs to the N-acetylglucosamine-1-phosphate uridyltransferase family. In the C-terminal section; belongs to the transferase hexapeptide repeat family. In terms of assembly, homotrimer. Mg(2+) is required as a cofactor.

It localises to the cytoplasm. The catalysed reaction is alpha-D-glucosamine 1-phosphate + acetyl-CoA = N-acetyl-alpha-D-glucosamine 1-phosphate + CoA + H(+). It catalyses the reaction N-acetyl-alpha-D-glucosamine 1-phosphate + UTP + H(+) = UDP-N-acetyl-alpha-D-glucosamine + diphosphate. It functions in the pathway nucleotide-sugar biosynthesis; UDP-N-acetyl-alpha-D-glucosamine biosynthesis; N-acetyl-alpha-D-glucosamine 1-phosphate from alpha-D-glucosamine 6-phosphate (route II): step 2/2. The protein operates within nucleotide-sugar biosynthesis; UDP-N-acetyl-alpha-D-glucosamine biosynthesis; UDP-N-acetyl-alpha-D-glucosamine from N-acetyl-alpha-D-glucosamine 1-phosphate: step 1/1. Its pathway is bacterial outer membrane biogenesis; LPS lipid A biosynthesis. Its function is as follows. Catalyzes the last two sequential reactions in the de novo biosynthetic pathway for UDP-N-acetylglucosamine (UDP-GlcNAc). The C-terminal domain catalyzes the transfer of acetyl group from acetyl coenzyme A to glucosamine-1-phosphate (GlcN-1-P) to produce N-acetylglucosamine-1-phosphate (GlcNAc-1-P), which is converted into UDP-GlcNAc by the transfer of uridine 5-monophosphate (from uridine 5-triphosphate), a reaction catalyzed by the N-terminal domain. The protein is Bifunctional protein GlmU of Helicobacter pylori (strain ATCC 700392 / 26695) (Campylobacter pylori).